A 481-amino-acid polypeptide reads, in one-letter code: CASP8 and FADD-like apoptosis regulator (481 aa).

2 DED domains span residues V6–K78 and D97–K172. Positions V6–K200 are interaction with CASP8. Residues V6–S229 are interaction with FADD. Residues V6 to Y307 form an interaction with CASP8 propeptide region. The interval L197–R436 is interaction with CASP3. The interaction with TRAF1 and TRAF2 stretch occupies residues L197–T481. The segment at R219 to T481 is interaction with CASP8 subunits p18 and p10. The caspase stretch occupies residues D265–Q360. Residues S372 to T481 form an interaction with CASP8 region.

It belongs to the peptidase C14A family. TNFRSF6 stimulation triggers recruitment to the death-inducing signaling complex (DISC) formed by TNFRSF6, FADD and CASP8. A proteolytic fragment (p43) stays associated with the DISC. Interacts with RIPK1. Proteolytically processed by CASP8 generating subunits p43 and p12. Highly expressed in heart.

Its function is as follows. Apoptosis regulator protein which may function as a crucial link between cell survival and cell death pathways in mammalian cells. Acts as an inhibitor of TNFRSF6 mediated apoptosis. A proteolytic fragment (p43) is likely retained in the death-inducing signaling complex (DISC) thereby blocking further recruitment and processing of caspase-8 at the complex. Full length and shorter isoforms have been shown either to induce apoptosis or to reduce TNFRSF-triggered apoptosis. Lacks enzymatic (caspase) activity. This Mus musculus (Mouse) protein is CASP8 and FADD-like apoptosis regulator (Cflar).